The sequence spans 261 residues: Glutathione S-transferase theta-1 (261 aa).

The region spanning 2–101 (GLELYLDLLS…YLSRKYNTPD (100 aa)) is the GST N-terminal domain. Glutathione contacts are provided by residues 72-73 (KV) and 85-86 (EC). The GST C-terminal domain maps to 107–248 (DIKKRAQVDE…LSNIQIDPQL (142 aa)).

This sequence belongs to the GST superfamily. Theta family. As to quaternary structure, homodimer.

The protein localises to the cytoplasm. It carries out the reaction RX + glutathione = an S-substituted glutathione + a halide anion + H(+). Its function is as follows. Conjugation of reduced glutathione to a wide number of exogenous and endogenous hydrophobic electrophiles. The chain is Glutathione S-transferase theta-1 (GSTT1) from Gallus gallus (Chicken).